The sequence spans 244 residues: Phosphoadenosine 5'-phosphosulfate reductase (244 aa).

The active-site Nucleophile; cysteine thiosulfonate intermediate is Cys-239.

This sequence belongs to the PAPS reductase family. CysH subfamily.

The protein resides in the cytoplasm. It catalyses the reaction [thioredoxin]-disulfide + sulfite + adenosine 3',5'-bisphosphate + 2 H(+) = [thioredoxin]-dithiol + 3'-phosphoadenylyl sulfate. It functions in the pathway sulfur metabolism; hydrogen sulfide biosynthesis; sulfite from sulfate: step 3/3. Its function is as follows. Catalyzes the formation of sulfite from phosphoadenosine 5'-phosphosulfate (PAPS) using thioredoxin as an electron donor. In Serratia proteamaculans (strain 568), this protein is Phosphoadenosine 5'-phosphosulfate reductase.